The chain runs to 423 residues: Probable WRKY transcription factor 58 (423 aa).

Disordered stretches follow at residues 91-128 (SSAH…AVHG), 142-171 (RNHY…DGYN), and 215-284 (IYKG…GVST). Low complexity-rich tracts occupy residues 99 to 111 (QPRQ…PQRP) and 144 to 162 (HYNN…VVNV). A DNA-binding region (WRKY 1) is located at residues 161–225 (NVDKPADDGY…YKGQHDHERP (65 aa)). Acidic residues predominate over residues 259–271 (DDDDDDDEDDEDL). The WRKY 2 DNA-binding region spans 300-365 (SEVDLLDDGY…YEGKHNHDVP (66 aa)).

The protein localises to the nucleus. Transcription factor. Interacts specifically with the W box (5'-(T)TGAC[CT]-3'), a frequently occurring elicitor-responsive cis-acting element. This Arabidopsis thaliana (Mouse-ear cress) protein is Probable WRKY transcription factor 58 (WRKY58).